Reading from the N-terminus, the 98-residue chain is Protein S100-A11 (98 aa).

A Phosphothreonine modification is found at threonine 5. EF-hand domains are found at residues 8-44 (CIES…ELAA) and 50-85 (KDPG…LAIA). Lysine 22 carries the N6-acetyllysine modification. Ca(2+) contacts are provided by asparagine 26, glutamine 28, glutamate 33, aspartate 63, asparagine 65, aspartate 67, glutamine 69, and glutamate 74.

The protein belongs to the S-100 family. In terms of assembly, homodimer; disulfide-linked. Post-translationally, phosphorylation at Thr-5 significantly suppresses homodimerization and promotes association with NCL/nucleolin which induces nuclear translocation.

Its subcellular location is the cytoplasm. The protein resides in the nucleus. Its function is as follows. Facilitates the differentiation and the cornification of keratinocytes. The polypeptide is Protein S100-A11 (S100a11) (Mus musculus (Mouse)).